A 230-amino-acid chain; its full sequence is Pyridoxal phosphate homeostasis protein (230 aa).

An N6-(pyridoxal phosphate)lysine modification is found at K36.

This sequence belongs to the pyridoxal phosphate-binding protein YggS/PROSC family.

Perhaps involved in proline biosynthesis. In terms of biological role, pyridoxal 5'-phosphate (PLP)-binding protein, which is involved in PLP homeostasis. The sequence is that of Pyridoxal phosphate homeostasis protein from Pseudomonas aeruginosa (strain ATCC 15692 / DSM 22644 / CIP 104116 / JCM 14847 / LMG 12228 / 1C / PRS 101 / PAO1).